A 329-amino-acid chain; its full sequence is Transaldolase (329 aa).

Residue K136 is the Schiff-base intermediate with substrate of the active site.

It belongs to the transaldolase family. Type 1 subfamily. Homodimer.

It is found in the cytoplasm. It carries out the reaction D-sedoheptulose 7-phosphate + D-glyceraldehyde 3-phosphate = D-erythrose 4-phosphate + beta-D-fructose 6-phosphate. It participates in carbohydrate degradation; pentose phosphate pathway; D-glyceraldehyde 3-phosphate and beta-D-fructose 6-phosphate from D-ribose 5-phosphate and D-xylulose 5-phosphate (non-oxidative stage): step 2/3. In terms of biological role, transaldolase is important for the balance of metabolites in the pentose-phosphate pathway. The polypeptide is Transaldolase (Methylococcus capsulatus (strain ATCC 33009 / NCIMB 11132 / Bath)).